A 1189-amino-acid chain; its full sequence is Disabled homolog 2-interacting protein (1189 aa).

The segment at 1–75 (MSAGGNARKS…EPSASTPFRV (75 aa)) is disordered. A compositionally biased stretch (basic residues) spans 20–38 (LLRRPRLQRQRSRSRSRTR). Positions 39-49 (PARESPQERPG) are enriched in basic and acidic residues. Residues 59-73 (SEKNPSMEPSASTPF) are compositionally biased toward polar residues. The 102-residue stretch at 101–202 (SFRHILPGFR…WMENLRRAVH (102 aa)) folds into the PH domain. The C2 domain occupies 193–311 (WMENLRRAVH…AGRQFVEKWY (119 aa)). A Ras-GAP domain is found at 387–595 (GKVKDFLTDL…TNMQRFLLEI (209 aa)). A necessary for interaction with AKT1 region spans residues 646–943 (LRDVHTALST…RTPPTLLSTL (298 aa)). Residues 653 to 668 (LSTPGSGQLPGTNDLA) are compositionally biased toward polar residues. Disordered stretches follow at residues 653 to 679 (LSTP…SSVS) and 715 to 738 (RSSG…PDLQ). The segment covering 669–679 (STPGSGSSSVS) has biased composition (low complexity). Positions 715-731 (RSSGVQPSPARSSSYSE) are enriched in polar residues. Position 728 is a phosphoserine; by MAP3K5 and RIPK1 (serine 728). Phosphoserine is present on serine 747. 5 disordered regions span residues 804–823 (VPTP…PQLL), 843–865 (PRGL…NSEE), 895–998 (SLTE…SPNA), 1015–1034 (EDEG…SKEE), and 1163–1189 (ARNG…SSNC). Residues 852 to 865 (EGHSSLSSHSNSEE) show a composition bias toward low complexity. Residues 919-931 (QPPPPPPPPPPAP) show a composition bias toward pro residues. Polar residues-rich tracts occupy residues 939 to 955 (LLST…TLAS) and 967 to 976 (LRQQSSSSKG). 2 positions are modified to phosphoserine: serine 978 and serine 995. Basic and acidic residues predominate over residues 1023-1034 (PPHRDRLRSKEE). A coiled-coil region spans residues 1025–1159 (HRDRLRSKEE…SALTQLKERY (135 aa)).

On plasma membrane, exists in an inactive form complexed with TNFR1; in response to TNF-alpha, dissociates from TNFR1 complex, translocates to cytoplasm and forms part of an intracellular signaling complex comprising TRADD, RIPK1, TRAF2 and MAP3K5. Interacts with DAB1. Part of a cytoplasmic complex made of HIPK1, DAB2IP and MAP3K5 in response to TNF-alpha; this complex formation promotes MAP3K5-JNK activation and subsequent apoptosis. Interacts (via N-terminal domain) with JAK2; the interaction occurs in a IFNG/IFN-gamma-dependent manner and inhibits JAK2 autophosphorylation activity. Interacts (via C2 domain) with GSK3B; the interaction stimulates GSK3B kinase activation. Interacts (via C2 domain) with PPP2CA. Interacts (via proline-rich motif) with a regulatory p85 subunit (via SH3 domain) of the PI3K complex; the interaction inhibits the PI3K-AKT complex activity in a TNF-alpha-dependent manner in prostate cancer (PCa) cells. Interacts with AKT1; the interaction is increased in a TNF-alpha-induced manner. Interacts (via C2 domain and active form preferentially) with KDR/VEGFR2 (tyrosine-phosphorylated active form preferentially); the interaction occurs at the late phase of VEGFA response and inhibits KDR/VEGFR2 activity. Interacts (via N-terminus C2 domain) with MAP3K5 ('Ser-966' dephosphorylated form preferentially); the interaction occurs in a TNF-alpha-induced manner. Interacts (via Ras-GAP domain) with the catalytic subunit of protein phosphatase PP2A; the interaction occurs in resting endothelial cells, is further enhanced by TNF-alpha stimulation and is required to bridge PP2A to MAP3K5. Interacts (via C-terminus PER domain) with TRAF2 (via zinc fingers); the interaction occurs in a TNF-alpha-dependent manner. Interacts with 14-3-3 proteins; the interaction occurs in a TNF-alpha-dependent manner. Interacts (via Ras-GAP domain) with RIPK1 (via kinase domain); the interaction occurs in a TNF-alpha-dependent manner. Interacts (via PH domain) with ERN1. Interacts with TRAF2. Interacts (via NPXY motif) with DAB2 (via PID domain). Interacts with RAB40C; acts as a GAP for RAB40C. Post-translationally, in response to TNF-alpha-induction, phosphorylated at Ser-728; phosphorylation leads to a conformational change, and thus, increases its association with 14-3-3 proteins, MAP3K5, RIPK1 and TRAF2 in endothelial cells; also stimulates regulatory p85 subunit sequestring and PI3K-p85 complex activity inhibition. As to expression, expressed in vascular endothelium of muscle and aorta, in smooth muscle cells of aorta and epithelial cells of lung. Expressed throughout the brain, including olfactory bulb, hypothalamus, cerebellum and cerebral cortex. Expressed in the soma and processes of neurons in a variety of brain structures, including the developing cerebral cortex, CA1 pyramidal neurons and Purkinje cells. Poorly expressed in medulloblastoma cells compared to cerebellar precursor proliferating progenitor cells (at protein level). Highly expressed in the brain, salivary gland, and testis; moderate expression in kidney and heart. Low expression in the lung, seminal vesicle, ventral prostate, epididymis, liver, and bladder. Very low expression in the coagulation gland and skeleton muscles. Lowest expression seen in spleen.

The protein localises to the cytoplasm. It localises to the cell membrane. It is found in the membrane. Its subcellular location is the cell projection. The protein resides in the dendrite. In terms of biological role, functions as a scaffold protein implicated in the regulation of a large spectrum of both general and specialized signaling pathways. Involved in several processes such as innate immune response, inflammation and cell growth inhibition, apoptosis, cell survival, angiogenesis, cell migration and maturation. Also plays a role in cell cycle checkpoint control; reduces G1 phase cyclin levels resulting in G0/G1 cell cycle arrest. Mediates signal transduction by receptor-mediated inflammatory signals, such as the tumor necrosis factor (TNF), interferon (IFN) or lipopolysaccharide (LPS). Modulates the balance between phosphatidylinositol 3-kinase (PI3K)-AKT-mediated cell survival and apoptosis stimulated kinase (MAP3K5)-JNK signaling pathways; sequesters both AKT1 and MAP3K5 and counterbalances the activity of each kinase by modulating their phosphorylation status in response to pro-inflammatory stimuli. Acts as a regulator of the endoplasmic reticulum (ER) unfolded protein response (UPR) pathway; specifically involved in transduction of the ER stress-response to the JNK cascade through ERN1. Mediates TNF-alpha-induced apoptosis activation by facilitating dissociation of inhibitor 14-3-3 from MAP3K5; recruits the PP2A phosphatase complex which dephosphorylates MAP3K5 on 'Ser-966', leading to the dissociation of 13-3-3 proteins and activation of the MAP3K5-JNK signaling pathway in endothelial cells. Also mediates TNF/TRAF2-induced MAP3K5-JNK activation, while it inhibits CHUK-NF-kappa-B signaling. Acts a negative regulator in the IFN-gamma-mediated JAK-STAT signaling cascade by inhibiting smooth muscle cell (VSMCs) proliferation and intimal expansion, and thus, prevents graft arteriosclerosis (GA). Acts as a GTPase-activating protein (GAP) for the ADP ribosylation factor 6 (ARF6) and Ras. Promotes hydrolysis of the ARF6-bound GTP and thus, negatively regulates phosphatidylinositol 4,5-bisphosphate (PIP2)-dependent TLR4-TIRAP-MyD88 and NF-kappa-B signaling pathways in endothelial cells in response to lipopolysaccharides (LPS). Binds specifically to phosphatidylinositol 4-phosphate (PtdIns4P) and phosphatidylinositol 3-phosphate (PtdIns3P). In response to vascular endothelial growth factor (VEGFA), acts as a negative regulator of the VEGFR2-PI3K-mediated angiogenic signaling pathway by inhibiting endothelial cell migration and tube formation. In the developing brain, promotes both the transition from the multipolar to the bipolar stage and the radial migration of cortical neurons from the ventricular zone toward the superficial layer of the neocortex in a glial-dependent locomotion process. Probable downstream effector of the Reelin signaling pathway; promotes Purkinje cell (PC) dendrites development and formation of cerebellar synapses. Also functions as a tumor suppressor protein in prostate cancer progression; prevents cell proliferation and epithelial-to-mesenchymal transition (EMT) through activation of the glycogen synthase kinase-3 beta (GSK3B)-induced beta-catenin and inhibition of PI3K-AKT and Ras-MAPK survival downstream signaling cascades, respectively. This is Disabled homolog 2-interacting protein (Dab2ip) from Mus musculus (Mouse).